A 407-amino-acid polypeptide reads, in one-letter code: MQMDSPKSPLQPPTYGNLVTILSIDGGGIRGLIPAVILGFLESELQKLDGEEARLADYFDVIAGTSTGGLVTAMLTAPNKEGRPLFAASEIKDFYLEQCPKIFPQDHFPFSAAKKLVKSLTGPKYDGKYLHQLIHAKLGDTKLSQTLTNVVIPTFDIKHLQPTIFSSYEVKNHPLKDATLADIAISTSAAPTYLPAHFFKVEDLNGNAKEYNLIDGGVAANNPALLAIGEVTNEISGGSSDFFPIRPNDYGRFLVLSLGTGNHKAEEKFNAKEVAGWGLLNWLTHDNSTPIIDAFSQASSDMVDFHLSAVFRALHSEANYIRIQDDTLTGDAASVDIATVENLDILAKTGDELLKKPVARVNLDSGCNENAYETTNEHALIKLAGILSKEKKIRDIRSPHAKAPIRI.

Positions 22-228 (LSIDGGGIRG…AANNPALLAI (207 aa)) constitute a PNPLA domain. Residues 26 to 31 (GGGIRG) carry the GXGXXG motif. Residues 64–68 (GTSTG) carry the GXSXG motif. Catalysis depends on serine 66, which acts as the Nucleophile. Catalysis depends on aspartate 215, which acts as the Proton acceptor. Residues 215–217 (DGG) carry the DGA/G motif. Serine 398 carries the post-translational modification Phosphoserine.

It belongs to the patatin family. As to expression, expressed specifically in roots.

Its subcellular location is the cytoplasm. Its function is as follows. Possesses non-specific lipolytic acyl hydrolase (LAH) activity. Catalyzes the hydrolysis of the galactolipids monogalactosyldiacylglycerol (MGDG) and digalactosyldiacylglycerol (DGDG), and less efficiently the phoshpolipids phosphatidylcholine (PC), phosphatidylethanolamine (PE), phosphatidylglycerol (PG), phosphatidic acid (PA), phosphatidylserine (PS) and phosphatidylinositol (PI). Favors the release of fatty acid at the sn-1 position for PC or PE and the sn-2 position for PG, PA, PS and PI. Negatively affects disease resistance to the necrotic fungal pathogen Botrytis cinerea and the avirulent bacteria Pseudomonas syringae by promoting cell death and reducing the efficiency of the hypersensitive response, respectively. However, PLP2 contributes to resistance to cucumber mosaic virus (CMV), an obligate parasite inducing hypersensitive response. May negatively regulate oxylipin production, possibly via participating in membrane repair that includes removal of oxidatively modified lipids. This is Patatin-like protein 2 (PLP2) from Arabidopsis thaliana (Mouse-ear cress).